We begin with the raw amino-acid sequence, 118 residues long: Small ribosomal subunit protein uS13 (118 aa).

Residues 91–118 are disordered; it reads HRRGLPVRGQRTRTNARTRKGPRRPIKK.

This sequence belongs to the universal ribosomal protein uS13 family. As to quaternary structure, part of the 30S ribosomal subunit. Forms a loose heterodimer with protein S19. Forms two bridges to the 50S subunit in the 70S ribosome.

Functionally, located at the top of the head of the 30S subunit, it contacts several helices of the 16S rRNA. In the 70S ribosome it contacts the 23S rRNA (bridge B1a) and protein L5 of the 50S subunit (bridge B1b), connecting the 2 subunits; these bridges are implicated in subunit movement. Contacts the tRNAs in the A and P-sites. This Methylococcus capsulatus (strain ATCC 33009 / NCIMB 11132 / Bath) protein is Small ribosomal subunit protein uS13.